The sequence spans 421 residues: Gamma-glutamyl phosphate reductase (421 aa).

The protein belongs to the gamma-glutamyl phosphate reductase family.

Its subcellular location is the cytoplasm. The enzyme catalyses L-glutamate 5-semialdehyde + phosphate + NADP(+) = L-glutamyl 5-phosphate + NADPH + H(+). The protein operates within amino-acid biosynthesis; L-proline biosynthesis; L-glutamate 5-semialdehyde from L-glutamate: step 2/2. Its function is as follows. Catalyzes the NADPH-dependent reduction of L-glutamate 5-phosphate into L-glutamate 5-semialdehyde and phosphate. The product spontaneously undergoes cyclization to form 1-pyrroline-5-carboxylate. This is Gamma-glutamyl phosphate reductase from Pseudomonas fluorescens (strain ATCC BAA-477 / NRRL B-23932 / Pf-5).